The following is a 211-amino-acid chain: Beta-crystallin B3 (211 aa).

Met1 carries the N-acetylmethionine modification. Residue Ala2 is modified to N-acetylalanine; in Beta-crystallin B3, N-terminally processed. Positions 2 to 23 (AEQHGAPEQAAAGKSHGGLGGS) are N-terminal arm. Beta/gamma crystallin 'Greek key' domains lie at 24 to 63 (YKVTVYELENFQGKRCELSAECPNLTDSLLEKVGSIQVES) and 64 to 108 (GPWL…RPLH). Residues 109 to 113 (IDGPD) are connecting peptide. Beta/gamma crystallin 'Greek key' domains follow at residues 114-155 (HKLH…RVIN) and 156-198 (GTWV…RRIR). The interval 200-211 (QKWHKRGCFLSS) is C-terminal arm.

This sequence belongs to the beta/gamma-crystallin family. In terms of assembly, homo/heterodimer, or complexes of higher-order. The structure of beta-crystallin oligomers seems to be stabilized through interactions between the N-terminal arms.

Functionally, crystallins are the dominant structural components of the vertebrate eye lens. This chain is Beta-crystallin B3 (Crybb3), found in Mus musculus (Mouse).